A 320-amino-acid chain; its full sequence is Mycothiol acetyltransferase (320 aa).

N-acetyltransferase domains lie at 8-141 and 152-320; these read SHLT…RSLR and LQIR…AALA. Glutamate 36 lines the 1D-myo-inositol 2-(L-cysteinylamino)-2-deoxy-alpha-D-glucopyranoside pocket. Residues 80–82 and 88–93 contribute to the acetyl-CoA site; these read LVV and RRGIAT. 1D-myo-inositol 2-(L-cysteinylamino)-2-deoxy-alpha-D-glucopyranoside contacts are provided by glutamate 179, lysine 229, and glutamate 239. Acetyl-CoA-binding positions include 243–245 and 250–256; these read LGV and QGRGLGR. Position 284 (tyrosine 284) interacts with 1D-myo-inositol 2-(L-cysteinylamino)-2-deoxy-alpha-D-glucopyranoside. 289–294 lines the acetyl-CoA pocket; it reads NIAAVR.

This sequence belongs to the acetyltransferase family. MshD subfamily. As to quaternary structure, monomer.

The enzyme catalyses 1D-myo-inositol 2-(L-cysteinylamino)-2-deoxy-alpha-D-glucopyranoside + acetyl-CoA = mycothiol + CoA + H(+). Its function is as follows. Catalyzes the transfer of acetyl from acetyl-CoA to desacetylmycothiol (Cys-GlcN-Ins) to form mycothiol. The polypeptide is Mycothiol acetyltransferase (Mycobacterium ulcerans (strain Agy99)).